Consider the following 434-residue polypeptide: Trigger factor (434 aa).

The PPIase FKBP-type domain maps to 161–246 (EDRVTIDFTG…LKKVEERELP (86 aa)).

This sequence belongs to the FKBP-type PPIase family. Tig subfamily.

The protein localises to the cytoplasm. The enzyme catalyses [protein]-peptidylproline (omega=180) = [protein]-peptidylproline (omega=0). Functionally, involved in protein export. Acts as a chaperone by maintaining the newly synthesized protein in an open conformation. Functions as a peptidyl-prolyl cis-trans isomerase. The sequence is that of Trigger factor from Pectobacterium carotovorum subsp. carotovorum (strain PC1).